The following is a 401-amino-acid chain: Cysteine desulfurase CsdA (401 aa).

K222 carries the N6-(pyridoxal phosphate)lysine modification. Residue C358 is the Cysteine persulfide intermediate of the active site.

The protein belongs to the class-V pyridoxal-phosphate-dependent aminotransferase family. Csd subfamily. In terms of assembly, homodimer. Forms a heterodimer with CsdE. It depends on pyridoxal 5'-phosphate as a cofactor.

The enzyme catalyses (sulfur carrier)-H + L-cysteine = (sulfur carrier)-SH + L-alanine. It catalyses the reaction L-selenocysteine + AH2 = hydrogenselenide + L-alanine + A + H(+). It carries out the reaction 3-sulfino-L-alanine + H2O = sulfite + L-alanine + H(+). Cysteine desulfurase activity is increased 2-fold in the presence of CsdE. Functionally, catalyzes the removal of elemental sulfur and selenium atoms from L-cysteine, L-cystine, L-selenocysteine, and L-selenocystine to produce L-alanine, and transiently retains the released sulfur atom on a cysteine residue, in the form of a persulfide. Can also desulfinate L-cysteine sulfinate (3-sulfino-L-alanine), which is the best substrate of the enzyme. Functions as a selenium delivery protein in the pathway for the biosynthesis of selenophosphate. Seems to participate in Fe/S biogenesis by recruiting the SufBCD-SufE proteins. Transfers sulfur to CsdE that increases the cysteine desulfurase activity of CsdA. Can also transfer sulfur directly to TcdA/CsdL in vitro. Appears to support the function of TcdA in the generation of cyclic threonylcarbamoyladenosine at position 37 (ct(6)A37) in tRNAs that read codons beginning with adenine. This is Cysteine desulfurase CsdA (csdA) from Escherichia coli (strain K12).